The primary structure comprises 230 residues: Uracil-DNA glycosylase (230 aa).

Asp-70 functions as the Proton acceptor in the catalytic mechanism.

This sequence belongs to the uracil-DNA glycosylase (UDG) superfamily. UNG family.

The protein localises to the cytoplasm. It carries out the reaction Hydrolyzes single-stranded DNA or mismatched double-stranded DNA and polynucleotides, releasing free uracil.. In terms of biological role, excises uracil residues from the DNA which can arise as a result of misincorporation of dUMP residues by DNA polymerase or due to deamination of cytosine. This chain is Uracil-DNA glycosylase, found in Pseudomonas putida (strain W619).